The sequence spans 394 residues: 1-acylglycerol-3-phosphate O-acyltransferase ICT1 (394 aa).

The 308-residue stretch at 74–381 folds into the AB hydrolase-1 domain; the sequence is VLIHGYAASS…AGHNLFLDNP (308 aa). The short motif at 374 to 379 is the HXXXXD motif element; the sequence is HNLFLD.

Belongs to the peptidase S33 family. ABHD4/ABHD5 subfamily.

It carries out the reaction a 1-acyl-sn-glycero-3-phosphate + an acyl-CoA = a 1,2-diacyl-sn-glycero-3-phosphate + CoA. In terms of biological role, lysophosphatidic acid acyltransferase involved in membrane remodeling leading to increased organic solvent tolerance. Involved in resistance to azoles and copper. In Saccharomyces cerevisiae (strain ATCC 204508 / S288c) (Baker's yeast), this protein is 1-acylglycerol-3-phosphate O-acyltransferase ICT1 (ICT1).